The sequence spans 123 residues: Large ribosomal subunit protein eL8 (123 aa).

Belongs to the eukaryotic ribosomal protein eL8 family. Part of the 50S ribosomal subunit. Probably part of the RNase P complex.

The protein resides in the cytoplasm. Multifunctional RNA-binding protein that recognizes the K-turn motif in ribosomal RNA, the RNA component of RNase P, box H/ACA, box C/D and box C'/D' sRNAs. This is Large ribosomal subunit protein eL8 from Methanobrevibacter smithii (strain ATCC 35061 / DSM 861 / OCM 144 / PS).